The chain runs to 510 residues: NAD(P)H-quinone oxidoreductase subunit 2, chloroplastic (510 aa).

The next 12 helical transmembrane spans lie at 24–44, 59–79, 99–119, 124–144, 149–169, 183–203, 229–249, 295–315, 323–343, 354–374, 395–415, and 418–438; these read LLLFHGSFIFPECILIFGLIL, WFYFISSTSLVISITALLFRW, IFQFLILLCSTLCIPLSVEYI, MAITEFLLFVLTATLGGMFLC, LITIFVAPECFSLCSYLLSGY, YLLMGGASSSILVHGFSWLYG, ISIALIFITVGIGFKLSPAPF, WHLLLEILAILSMILGNLIAI, MLAYSSIGQIGYVIIGIIVGD, YMLFYISMNLGTFACIVLFGL, ALSSALCLLSLGGLPPLAGFF, and LYLFWCGWQAGLYFLVSIGLL.

Belongs to the complex I subunit 2 family. NDH is composed of at least 16 different subunits, 5 of which are encoded in the nucleus.

Its subcellular location is the plastid. The protein resides in the chloroplast thylakoid membrane. It catalyses the reaction a plastoquinone + NADH + (n+1) H(+)(in) = a plastoquinol + NAD(+) + n H(+)(out). The enzyme catalyses a plastoquinone + NADPH + (n+1) H(+)(in) = a plastoquinol + NADP(+) + n H(+)(out). NDH shuttles electrons from NAD(P)H:plastoquinone, via FMN and iron-sulfur (Fe-S) centers, to quinones in the photosynthetic chain and possibly in a chloroplast respiratory chain. The immediate electron acceptor for the enzyme in this species is believed to be plastoquinone. Couples the redox reaction to proton translocation, and thus conserves the redox energy in a proton gradient. This Ananas comosus (Pineapple) protein is NAD(P)H-quinone oxidoreductase subunit 2, chloroplastic.